We begin with the raw amino-acid sequence, 365 residues long: Prostaglandin E2 receptor EP3 subtype (365 aa).

Residues 1 to 30 are Extracellular-facing; that stretch reads MAGVWAPEHSVEAHSNQSSAADGCGSVSVA. The N-linked (GlcNAc...) asparagine glycan is linked to Asn16. A helical membrane pass occupies residues 31-55; it reads FPITMMVTGFVGNALAMLLVVRSYR. Topologically, residues 56-68 are cytoplasmic; the sequence is RRESKRKKSFLLC. Residues 69 to 89 form a helical membrane-spanning segment; sequence IGWLALTDLVGQLLTSPVVIL. Topologically, residues 90–108 are extracellular; that stretch reads VYLSQRRWEQLDPSGRLCT. Cys107 and Cys184 form a disulfide bridge. Residues 109–130 traverse the membrane as a helical segment; it reads FFGLTMTVFGLSSLLVASAMAV. Topologically, residues 131–151 are cytoplasmic; the sequence is ERALAIRAPHWYASHMKTRAT. A helical transmembrane segment spans residues 152–173; that stretch reads PVLLGVWLSVLAFALLPVLGVG. The Extracellular portion of the chain corresponds to 174 to 203; it reads RYSVQWPGTWCFISTGPAGNETDSAREPGS. N-linked (GlcNAc...) asparagine glycosylation is present at Asn193. A helical membrane pass occupies residues 204-229; the sequence is VAFASAFACLGLLALVVTFACNLATI. Residues 230–259 are Cytoplasmic-facing; it reads KALVSRCRAKAAASQSSAQWGRITTETAIQ. The helical transmembrane segment at 260–283 threads the bilayer; the sequence is LMGIMCVLSVCWSPLLIMMLKMIF. Topologically, residues 284 to 303 are extracellular; sequence NQMSVEQCKTQMGKEKECNS. Residues 304–325 form a helical membrane-spanning segment; the sequence is FLIAVRLASLNQILDPWVYLLL. Topologically, residues 326-365 are cytoplasmic; sequence RKILLRKFCQIRDHTNYASSSTSLPCPGSSVLMWSDQLER.

The protein belongs to the G-protein coupled receptor 1 family. Interacts (via C-terminus) with MKLN1. As to quaternary structure, does not interact with MKLN1. As to expression, principally expressed in the tubules of the renal medulla. Specific expression is seen in medullary and cortical thick ascending limbs; lower levels are detected in cortical and inner medullary collecting ducts. Not detected significantly in the glomeruli. In the brain, expressed in all types of glial cells.

The protein localises to the cell membrane. Receptor for prostaglandin E2 (PGE2). Required for normal development of fever in response to pyrinogens, including IL1B, prostaglandin E2 and bacterial lipopolysaccharide (LPS). Required for normal potentiation of platelet aggregation by prostaglandin E2, and thus plays a role in the regulation of blood coagulation. Required for increased HCO3(-) secretion in the duodenum in response to mucosal acidification, and thereby contributes to the protection of the mucosa against acid-induced ulceration. Not required for normal kidney function, normal urine volume and osmolality. Its function is as follows. Receptor for prostaglandin E2 (PGE2); ligand binding activates a signaling cascade via G(i) proteins that leads to the inhibition of adenylate cyclase. In terms of biological role, receptor for prostaglandin E2 (PGE2); ligand binding can activate several distinct signaling cascades, resulting in activation or inhibition of adenylate cyclase. This is Prostaglandin E2 receptor EP3 subtype (Ptger3) from Rattus norvegicus (Rat).